Reading from the N-terminus, the 813-residue chain is Leucine--tRNA ligase (813 aa).

A 'HIGH' region motif is present at residues 42 to 52; sequence PYTSGNLHIGH. Residues 580–584 carry the 'KMSKS' region motif; the sequence is KMSKS. Residue Lys583 coordinates ATP.

The protein belongs to the class-I aminoacyl-tRNA synthetase family.

Its subcellular location is the cytoplasm. It catalyses the reaction tRNA(Leu) + L-leucine + ATP = L-leucyl-tRNA(Leu) + AMP + diphosphate. In Dehalococcoides mccartyi (strain ATCC BAA-2100 / JCM 16839 / KCTC 5957 / BAV1), this protein is Leucine--tRNA ligase.